The sequence spans 520 residues: Cytochrome P450 monooxygenase vrtE (520 aa).

Residues 16–36 form a helical membrane-spanning segment; it reads ALSLLHYVLGAIFLLLLFHML. A glycan (N-linked (GlcNAc...) asparagine) is linked at Asn137. Residue Cys459 coordinates heme.

The protein belongs to the cytochrome P450 family. Heme serves as cofactor.

It localises to the membrane. The protein operates within secondary metabolite biosynthesis; terpenoid biosynthesis. Cytochrome P450 monooxygenase; part of the gene cluster that mediates the biosynthesis of viridicatumtoxin, a tetracycline-like fungal meroterpenoid with a unique, fused spirobicyclic ring system. The first step of the pathway is the production of the malonamoyl-CoA starter unit for the polyketide synthase vrtA. The aldolase vrtJ may be involved in the synthesis of the malonamate substrate for malonamoyl-CoA synthetase vrtB. The polyketide synthase vrtA then may utilize the malonamoyl-CoA starter unit, followed by sequential condensation of eight malonyl-CoA units to form the polyketide backbone. The cyclization of the last ring could be mediated by the lactamase-like protein vrtG. The proposed post-PKS tailoring steps are a hydroxylation at C5 catalyzed the cytochrome P450 monooxygenase vrtE, a hydroxylation at C12a catalyzed by VrtH and/or VrtI, and an O-methylation by the O-methyltransferase vrtF. VrtC is then proposed to catalyze the transfer of a geranyl group synthesized by vrtD to the aromatic C ring of the tetracyclic polyketide intermediate of viridicatumtoxin to yield previridicatumtoxin. Finally, the cytochrome P450 monooxygenase vrtK catalyzes the spirocyclization of the geranyl moiety of previridicatumtoxin to afford viridicatumtoxin. The chain is Cytochrome P450 monooxygenase vrtE from Penicillium aethiopicum.